Consider the following 420-residue polypeptide: Mannose-1-phosphate guanylyltransferase regulatory subunit alpha (420 aa).

The interval 2–251 (LKAVILIGGP…DGIWSQIKSA (250 aa)) is substrate-binding domain. GDP-alpha-D-mannose-binding residues include Glu-85 and Gln-247. Positions 273–420 (LAKHTPGGPR…SRSFTNQIIL (148 aa)) are hexapeptide repeat domain. A C-loop region spans residues 356 to 384 (TPNDPNPNDPRARMDSESLFKDGKLLPAI).

Belongs to the transferase hexapeptide repeat family. As to quaternary structure, component of the GMPPA-GMPPB mannose-1-phosphate guanylyltransferase complex composed of 4 GMPPA subunits and 8 GMPPB subunits; the complex is organized into three layers, a central layer made up of 2 GMPPA dimers sandwiched between two layers each made up of 2 GMPPB dimers.

The protein localises to the cytoplasm. Its function is as follows. Regulatory subunit of the GMPPA-GMPPB mannose-1-phosphate guanylyltransferase complex; reduces the catalytic activity of GMPPB when part of the complex. Mediates allosteric feedback inhibition of GMPPB catalytic activity upon binding GDP-alpha-D-mannose. Together with GMPPB regulates GDP-alpha-D-mannose levels. The protein is Mannose-1-phosphate guanylyltransferase regulatory subunit alpha (GMPPA) of Papio anubis (Olive baboon).